Consider the following 178-residue polypeptide: Cytochrome b6-f complex iron-sulfur subunit (178 aa).

The helical transmembrane segment at 20–42 (LLTFGSVTGVALGALYPVVNYFI) threads the bilayer. A Rieske domain is found at 65-161 (ATGWLSSHPE…VSVENDNVFV (97 aa)). [2Fe-2S] cluster contacts are provided by Cys107, His109, Cys125, and His128. Cys112 and Cys127 form a disulfide bridge.

It belongs to the Rieske iron-sulfur protein family. As to quaternary structure, the 4 large subunits of the cytochrome b6-f complex are cytochrome b6, subunit IV (17 kDa polypeptide, PetD), cytochrome f and the Rieske protein, while the 4 small subunits are PetG, PetL, PetM and PetN. The complex functions as a dimer. The cofactor is [2Fe-2S] cluster.

The protein localises to the cellular thylakoid membrane. It carries out the reaction 2 oxidized [plastocyanin] + a plastoquinol + 2 H(+)(in) = 2 reduced [plastocyanin] + a plastoquinone + 4 H(+)(out). Its function is as follows. Component of the cytochrome b6-f complex, which mediates electron transfer between photosystem II (PSII) and photosystem I (PSI), cyclic electron flow around PSI, and state transitions. The polypeptide is Cytochrome b6-f complex iron-sulfur subunit (Parasynechococcus marenigrum (strain WH8102)).